We begin with the raw amino-acid sequence, 127 residues long: Large ribosomal subunit protein bL21 (127 aa).

This sequence belongs to the bacterial ribosomal protein bL21 family. Part of the 50S ribosomal subunit. Contacts protein L20.

This protein binds to 23S rRNA in the presence of protein L20. In Synechococcus elongatus (strain ATCC 33912 / PCC 7942 / FACHB-805) (Anacystis nidulans R2), this protein is Large ribosomal subunit protein bL21.